We begin with the raw amino-acid sequence, 479 residues long: Pup--protein ligase (479 aa).

Glu-17 contacts Mg(2+). Arg-62 is a binding site for ATP. Tyr-64 contacts Mg(2+). Asp-66 acts as the Proton acceptor in catalysis. A Mg(2+)-binding site is contributed by Glu-72. Residues Ser-75 and Trp-432 each contribute to the ATP site.

Belongs to the Pup ligase/Pup deamidase family. Pup-conjugating enzyme subfamily.

It carries out the reaction ATP + [prokaryotic ubiquitin-like protein]-L-glutamate + [protein]-L-lysine = ADP + phosphate + N(6)-([prokaryotic ubiquitin-like protein]-gamma-L-glutamyl)-[protein]-L-lysine.. It participates in protein degradation; proteasomal Pup-dependent pathway. The protein operates within protein modification; protein pupylation. Catalyzes the covalent attachment of the prokaryotic ubiquitin-like protein modifier Pup to the proteasomal substrate proteins, thereby targeting them for proteasomal degradation. This tagging system is termed pupylation. The ligation reaction involves the side-chain carboxylate of the C-terminal glutamate of Pup and the side-chain amino group of a substrate lysine. This is Pup--protein ligase from Corynebacterium diphtheriae (strain ATCC 700971 / NCTC 13129 / Biotype gravis).